Reading from the N-terminus, the 81-residue chain is Cytochrome b559 subunit alpha (81 aa).

Residues 21-35 (VIHSITIPSLFVSGW) traverse the membrane as a helical segment. H23 is a heme binding site.

Belongs to the PsbE/PsbF family. In terms of assembly, heterodimer of an alpha subunit and a beta subunit. PSII is composed of 1 copy each of membrane proteins PsbA, PsbB, PsbC, PsbD, PsbE, PsbF, PsbH, PsbI, PsbJ, PsbK, PsbL, PsbM, PsbT, PsbX, PsbY, PsbZ, Psb30/Ycf12, at least 3 peripheral proteins of the oxygen-evolving complex and a large number of cofactors. It forms dimeric complexes. It depends on heme b as a cofactor.

The protein resides in the plastid. It is found in the chloroplast thylakoid membrane. Its function is as follows. This b-type cytochrome is tightly associated with the reaction center of photosystem II (PSII). PSII is a light-driven water:plastoquinone oxidoreductase that uses light energy to abstract electrons from H(2)O, generating O(2) and a proton gradient subsequently used for ATP formation. It consists of a core antenna complex that captures photons, and an electron transfer chain that converts photonic excitation into a charge separation. The polypeptide is Cytochrome b559 subunit alpha (Mesostigma viride (Green alga)).